Here is a 240-residue protein sequence, read N- to C-terminus: Probable peptide export permease protein YydJ (240 aa).

The next 6 membrane-spanning stretches (helical) occupy residues 13–33 (VIII…FLLV), 50–70 (SYTV…AFFI), 97–117 (IAVL…IISL), 126–146 (ALLL…IGTI), 153–173 (ILIS…LVAI), and 210–230 (VLFI…VLRF).

In terms of assembly, the complex is composed of 2 ATP-binding proteins (YydI), two transmembrane proteins (YydJ).

It localises to the cell membrane. In terms of biological role, suggested to be part of an ABC transporter complex YydIJ involved in export of the modified peptide YydF. This chain is Probable peptide export permease protein YydJ (yydJ), found in Bacillus subtilis (strain 168).